Here is a 245-residue protein sequence, read N- to C-terminus: MSQSTSTLRRNGFTFKQFFVAHDRCAMKVGTDGILLGAWAPVAGVTRILDIGTGSGLLALMLAQRTDESVTIDAVELDSEAATQAQENIAHSPWPQRITVHTEDVRQWVPRQTARFDLIISNPPYYEQGVECATPQREQARYTTTLDHEALLTTAAECITEEGFFCVVLPEQTGNTFTQQALSMGWHLRLRTDVAETESRLPHRVLLAFSPRTGECFSDRLVIRGPDQLYSEGYTALTQAFYLFM.

This sequence belongs to the methyltransferase superfamily. tRNA (adenine-N(6)-)-methyltransferase family.

It localises to the cytoplasm. The enzyme catalyses adenosine(37) in tRNA1(Val) + S-adenosyl-L-methionine = N(6)-methyladenosine(37) in tRNA1(Val) + S-adenosyl-L-homocysteine + H(+). Functionally, specifically methylates the adenine in position 37 of tRNA(1)(Val) (anticodon cmo5UAC). The sequence is that of tRNA1(Val) (adenine(37)-N6)-methyltransferase from Citrobacter koseri (strain ATCC BAA-895 / CDC 4225-83 / SGSC4696).